The sequence spans 35 residues: PTEN upstream open reading frame MP31 (35 aa).

As to quaternary structure, interacts with lactate dehydrogenases LDHA and LDHB; interaction with mitochondrial LDH leads to inhibition of lactate dehydrogenase activity, preventing conversion of lactate to pyruvate. In terms of tissue distribution, detected in brain, kidney and liver (at protein level).

Its subcellular location is the mitochondrion. In terms of biological role, inhibits lactate dehydrogenase (LDH)-mediated conversion of lactate to pyruvate in mitochondria by competing with mitochondrial LDH for binding to NAD(+). Also inhibits cellular lactate utilization. This is PTEN upstream open reading frame MP31 from Mus musculus (Mouse).